The chain runs to 399 residues: Presilphiperfolan-8-beta-ol synthase (399 aa).

A disordered region spans residues methionine 1–phenylalanine 60. Over residues threonine 15 to serine 27 the composition is skewed to low complexity. Residues glycine 28–leucine 37 show a composition bias toward polar residues. Mg(2+)-binding residues include aspartate 141, asparagine 285, and serine 289. The DDXXD motif signature appears at aspartate 141–aspartate 145. Positions 373 and 374 each coordinate (2E,6E)-farnesyl diphosphate.

Belongs to the terpene synthase family. Mg(2+) serves as cofactor.

It carries out the reaction (2E,6E)-farnesyl diphosphate + H2O = presilphiperfolan-8beta-ol + diphosphate. Its pathway is secondary metabolite biosynthesis. Its function is as follows. Presilphiperfolan-8-beta-ol synthase; part of the gene cluster that mediates the biosynthesis of botrydial. Botrydial is necessary for colonization of plant tissue by the T4 strain. It is a strain-dependent virulence factor since highly aggressive strains like SAS56 or B05 still retain substantial virulence when botrydial synthesis is impaired, since they produce also botcinic acid. The first step of botrydial biosynthesis is performed by the sesquiterpene synthase BOT2 which catalyzes the cyclization of farnesyl diphosphate (FPP) to presilphiperfolan-8-beta-ol (PSP). The cytochrome P450 monooxygenase BOT4 then catalyzes the hydroxylation at C-4 to give a probotryane intermediate. Acetylation of the hydroxyl at C-4 is carried out by the acetyltransferase BOT5, followed by the combined action of the P450 monooxygenases BOT3 and BOT1, to yield finally the glycol, via the regio- and stereospecific hydroxylations at C-10 and C-15 of the probotryane intermediates, respectively. The cleavage of the C10-C15 bond of probotryane skeleton is an intriguing and chemically important reaction, which could be mediated by some of the monooxygenases or by a combination of them. It is possible that either BOT3 or BOT1 would oxidize either the 10- or the 15-hydroxy group to the hydroperoxide derivative, which would then undergo heterolytic fragmentation to give the dialdehyde botrydial. Finally, the dehydrogenase BOT7 might be involved in the conversion of botrydial to dihydrobotrydial. The sequence is that of Presilphiperfolan-8-beta-ol synthase (BOT2) from Botryotinia fuckeliana (Noble rot fungus).